Reading from the N-terminus, the 480-residue chain is Protein nucleotidyltransferase YdiU (480 aa).

Residues G86, G88, R89, K109, D121, G122, R172, and R179 each contribute to the ATP site. The active-site Proton acceptor is the D248. Positions 249 and 258 each coordinate Mg(2+). Residue D258 participates in ATP binding.

This sequence belongs to the SELO family. It depends on Mg(2+) as a cofactor. Requires Mn(2+) as cofactor.

It catalyses the reaction L-seryl-[protein] + ATP = 3-O-(5'-adenylyl)-L-seryl-[protein] + diphosphate. The enzyme catalyses L-threonyl-[protein] + ATP = 3-O-(5'-adenylyl)-L-threonyl-[protein] + diphosphate. The catalysed reaction is L-tyrosyl-[protein] + ATP = O-(5'-adenylyl)-L-tyrosyl-[protein] + diphosphate. It carries out the reaction L-histidyl-[protein] + UTP = N(tele)-(5'-uridylyl)-L-histidyl-[protein] + diphosphate. It catalyses the reaction L-seryl-[protein] + UTP = O-(5'-uridylyl)-L-seryl-[protein] + diphosphate. The enzyme catalyses L-tyrosyl-[protein] + UTP = O-(5'-uridylyl)-L-tyrosyl-[protein] + diphosphate. Nucleotidyltransferase involved in the post-translational modification of proteins. It can catalyze the addition of adenosine monophosphate (AMP) or uridine monophosphate (UMP) to a protein, resulting in modifications known as AMPylation and UMPylation. This chain is Protein nucleotidyltransferase YdiU, found in Klebsiella pneumoniae (strain 342).